The sequence spans 494 residues: Folate-biopterin transporter (494 aa).

The next 12 membrane-spanning stretches (helical) occupy residues 31 to 51 (APSW…VLGL), 64 to 84 (LGLS…PWIL), 104 to 124 (SYLW…AAWV), 133 to 153 (VLLF…SLVV), 170 to 190 (LTWG…GALL), 197 to 217 (TVFA…FLIS), 246 to 266 (ILLP…ESAF), 284 to 303 (VRLV…QRFL), 310 to 330 (VIMG…LILI), 346 to 366 (LGDS…VLVL), 375 to 395 (IEAT…VLSF), and 415 to 435 (LALL…FLGL). The segment at 441-461 (PQVKDKTEKEDNPDDPGDRLV) is disordered.

This sequence belongs to the major facilitator superfamily. Folate-biopterin transporter (TC 2.A.71) family.

It is found in the cell membrane. Mediates folate monoglutamate transport involved in tetrahydrofolate biosynthesis. It also mediates transport of antifolates, such as methotrexate and aminopterin. The protein is Folate-biopterin transporter of Synechocystis sp. (strain ATCC 27184 / PCC 6803 / Kazusa).